Reading from the N-terminus, the 407-residue chain is Polygalacturonase (407 aa).

Positions 1 to 26 are cleaved as a signal peptide; the sequence is MAPHLNIVPSMFVLLLLFISASKVQP. 2 PbH1 repeats span residues 180–206 and 207–228; these read CKNITLERLKIEAPDESPNTDGIHMGK and SEGVNIIASDIKTGDDCISIGD. A glycan (N-linked (GlcNAc...) asparagine) is linked at Asn-182. Asp-221 acts as the Proton donor in catalysis. A disulfide bridge links Cys-223 with Cys-240. His-244 is an active-site residue. PbH1 repeat units lie at residues 260-281 and 290-311; these read VEGIKISNCTITNTSNGARIKT and VSEIHFEDITMNNVSSPILIDQ. Asn-267, Asn-272, Asn-302, and Asn-331 each carry an N-linked (GlcNAc...) asparagine glycan. 2 disulfide bridges follow: Cys-351–Cys-357 and Cys-379–Cys-395. The stretch at 357 to 384 is one PbH1 5 repeat; the sequence is CQNVELADIDIQHNGAEPATSQCLNVKP.

It belongs to the glycosyl hydrolase 28 family. As to expression, pollen.

It is found in the secreted. Its subcellular location is the cell wall. The enzyme catalyses (1,4-alpha-D-galacturonosyl)n+m + H2O = (1,4-alpha-D-galacturonosyl)n + (1,4-alpha-D-galacturonosyl)m.. Functionally, may function in the depolymerization of the pectin in its walls during pollen tube elongation, or in that of the pistil during pollination. The chain is Polygalacturonase (G9) from Gossypium barbadense (Sea Island cotton).